An 808-amino-acid polypeptide reads, in one-letter code: Auxin response factor 4 (808 aa).

Over residues 1–13 (MPPAAMAPPPPPQ) the composition is skewed to pro residues. Residues 1–20 (MPPAAMAPPPPPQGSSTGDP) form a disordered region. Positions 129 to 231 (FCKTLTASDT…ELRVGVRRAM (103 aa)) form a DNA-binding region, TF-B3. A compositionally biased stretch (basic and acidic residues) spans 342 to 352 (PSTIPRPDRVS). Disordered stretches follow at residues 342 to 433 (PSTI…DSDV), 661 to 691 (TAGT…VAST), and 778 to 808 (QKMN…KSDN). The span at 402–432 (AQAQRSQNSTVLQGQEQMTLRSNLTESNDSD) shows a compositional bias: polar residues. The 94-residue stretch at 692 to 785 (RSCTKVHKQG…EVQKMNSKSN (94 aa)) folds into the PB1 domain. Positions 787-799 (PRKDDSSENEKGH) are enriched in basic and acidic residues.

It belongs to the ARF family. As to quaternary structure, homodimers and heterodimers. Expressed in roots, culms, leaves and young panicles.

The protein localises to the nucleus. Functionally, auxin response factors (ARFs) are transcriptional factors that bind specifically to the DNA sequence 5'-TGTCTC-3' found in the auxin-responsive promoter elements (AuxREs). In Oryza sativa subsp. japonica (Rice), this protein is Auxin response factor 4 (ARF4).